Reading from the N-terminus, the 372-residue chain is Glutamate 5-kinase (372 aa).

K14 lines the ATP pocket. Substrate-binding residues include S54, D141, and N153. 173-174 contacts ATP; the sequence is TD. Residues 280 to 358 enclose the PUA domain; it reads RGHVVIDAGA…GEIESVLGYM (79 aa).

This sequence belongs to the glutamate 5-kinase family.

The protein resides in the cytoplasm. The catalysed reaction is L-glutamate + ATP = L-glutamyl 5-phosphate + ADP. The protein operates within amino-acid biosynthesis; L-proline biosynthesis; L-glutamate 5-semialdehyde from L-glutamate: step 1/2. In terms of biological role, catalyzes the transfer of a phosphate group to glutamate to form L-glutamate 5-phosphate. The sequence is that of Glutamate 5-kinase from Burkholderia multivorans (strain ATCC 17616 / 249).